The primary structure comprises 562 residues: Glucocorticoid modulatory element-binding protein 1 (562 aa).

A2 carries the N-acetylalanine modification. One can recognise an SAND domain in the interval 72–156 (ASSIEGNEDM…RKMMDSGQID (85 aa)). C103 contributes to the Zn(2+) binding site. DNA-binding residues include K129, K133, K136, and R147. Residues H160, C164, and C168 each coordinate Zn(2+). Residues 311–355 (LDNRRKQVEQGEEQFLYTLADLERQLEEQKKQAQDPRLKSQTVQN) are a coiled coil. Residues 360–384 (PVSTPKPPKRPRLQRPASTTVLSPS) are disordered. Positions 375 to 384 (PASTTVLSPS) are enriched in polar residues.

As to quaternary structure, homodimer, and heterodimer of GMEB1 and GMEB2. Interacts with TRIM63. Interacts with the glucocorticoid receptor (NR3C1) and NCOA2/TIF2. May interact with HSP27 and CREB-binding protein (CBP). In terms of tissue distribution, ubiquitous. Low levels were detected in heart, brain, spleen, lung, liver, skeletal muscle, kidney and testis.

The protein localises to the nucleus. Its subcellular location is the cytoplasm. Trans-acting factor that binds to glucocorticoid modulatory elements (GME) present in the TAT (tyrosine aminotransferase) promoter and increases sensitivity to low concentrations of glucocorticoids. Also binds to the transferrin receptor promoter. In Mus musculus (Mouse), this protein is Glucocorticoid modulatory element-binding protein 1 (Gmeb1).